The sequence spans 469 residues: Ribulose bisphosphate carboxylase large chain (469 aa).

Lysine 5 is modified (N6,N6,N6-trimethyllysine). The substrate site is built by asparagine 114 and threonine 164. The Proton acceptor role is filled by lysine 166. Lysine 168 contributes to the substrate binding site. Residues lysine 192, aspartate 194, and glutamate 195 each contribute to the Mg(2+) site. N6-carboxylysine is present on lysine 192. Histidine 285 (proton acceptor) is an active-site residue. The substrate site is built by arginine 286, histidine 318, and serine 370.

Belongs to the RuBisCO large chain family. Type I subfamily. As to quaternary structure, heterohexadecamer of 8 large chains and 8 small chains; disulfide-linked. The disulfide link is formed within the large subunit homodimers. Mg(2+) is required as a cofactor. Post-translationally, the disulfide bond which can form in the large chain dimeric partners within the hexadecamer appears to be associated with oxidative stress and protein turnover.

The protein localises to the plastid. It is found in the chloroplast. It catalyses the reaction 2 (2R)-3-phosphoglycerate + 2 H(+) = D-ribulose 1,5-bisphosphate + CO2 + H2O. The enzyme catalyses D-ribulose 1,5-bisphosphate + O2 = 2-phosphoglycolate + (2R)-3-phosphoglycerate + 2 H(+). Functionally, ruBisCO catalyzes two reactions: the carboxylation of D-ribulose 1,5-bisphosphate, the primary event in carbon dioxide fixation, as well as the oxidative fragmentation of the pentose substrate in the photorespiration process. Both reactions occur simultaneously and in competition at the same active site. This chain is Ribulose bisphosphate carboxylase large chain, found in Antirhea lucida (Palo iloron).